A 445-amino-acid chain; its full sequence is Aminopeptidase S (445 aa).

The N-terminal stretch at 1–45 is a signal peptide; the sequence is MRPNRFSLRRSPTAVAAVALAAVLAAGAPAAQAAGAAAPTAAAAA. Positions 48 and 49 each coordinate Ca(2+). Residues histidine 130 and aspartate 142 each contribute to the Zn(2+) site. Glutamate 176 serves as the catalytic Proton acceptor. Zn(2+) is bound by residues glutamate 177, aspartate 205, and histidine 292. Cysteine 290 and cysteine 295 are disulfide-bonded. Aspartate 307 and aspartate 311 together coordinate Ca(2+). In terms of domain architecture, P/Homo B spans 325–445; it reads GEPPTGEGVF…GYIDSWKLTF (121 aa). A propeptide spans 330–445 (removed in mature form); the sequence is GEGVFSNTTD…GYIDSWKLTF (116 aa).

It belongs to the peptidase M28 family. M28A subfamily. As to quaternary structure, monomer. The cofactor is Ca(2+). Requires Zn(2+) as cofactor. Mn(2+) serves as cofactor. It depends on Co(2+) as a cofactor.

Its subcellular location is the secreted. The catalysed reaction is Release of an N-terminal amino acid with a preference for large hydrophobic amino-terminus residues.. Calcium activates the enzyme, inhibited by 1,10-phenanthroline, EDTA and EGTA. End-product inhibited by L-amino acids. Non-competitively inhibited by NaF and NaH(2)PO(4). Functionally, an exopeptidase specific for larger hydrophobic amino acids (especially leucine), no cleavage occurs if the next residue is proline. The chain is Aminopeptidase S from Streptomyces griseus subsp. griseus (strain JCM 4626 / CBS 651.72 / NBRC 13350 / KCC S-0626 / ISP 5235).